We begin with the raw amino-acid sequence, 446 residues long: Exodeoxyribonuclease 7 large subunit (446 aa).

It belongs to the XseA family. As to quaternary structure, heterooligomer composed of large and small subunits.

It localises to the cytoplasm. It catalyses the reaction Exonucleolytic cleavage in either 5'- to 3'- or 3'- to 5'-direction to yield nucleoside 5'-phosphates.. Functionally, bidirectionally degrades single-stranded DNA into large acid-insoluble oligonucleotides, which are then degraded further into small acid-soluble oligonucleotides. The sequence is that of Exodeoxyribonuclease 7 large subunit from Ligilactobacillus salivarius (strain UCC118) (Lactobacillus salivarius).